The chain runs to 189 residues: Elongation factor P (189 aa).

K34 carries the post-translational modification N6-(3,6-diaminohexanoyl)-5-hydroxylysine.

This sequence belongs to the elongation factor P family. In terms of processing, may be beta-lysylated on the epsilon-amino group of Lys-34 by the combined action of EpmA and EpmB, and then hydroxylated on the C5 position of the same residue by EpmC (if this protein is present). Lysylation is critical for the stimulatory effect of EF-P on peptide-bond formation. The lysylation moiety may extend toward the peptidyltransferase center and stabilize the terminal 3-CCA end of the tRNA. Hydroxylation of the C5 position on Lys-34 may allow additional potential stabilizing hydrogen-bond interactions with the P-tRNA.

Its subcellular location is the cytoplasm. It functions in the pathway protein biosynthesis; polypeptide chain elongation. Involved in peptide bond synthesis. Alleviates ribosome stalling that occurs when 3 or more consecutive Pro residues or the sequence PPG is present in a protein, possibly by augmenting the peptidyl transferase activity of the ribosome. Modification of Lys-34 is required for alleviation. The protein is Elongation factor P of Francisella philomiragia subsp. philomiragia (strain ATCC 25017 / CCUG 19701 / FSC 153 / O#319-036).